The sequence spans 1177 residues: Putative ATP-dependent RNA helicase TDRD12 (1177 aa).

Positions T56 to L118 constitute a Tudor 1 domain. The 189-residue stretch at W447 to V635 folds into the Helicase ATP-binding domain. S460–L467 contacts ATP. Positions D574 to E577 match the DEAH box motif. Residues I900 to F999 enclose the Tudor 2 domain. Positions E1098–R1177 are disordered. Residues S1100–Q1115 show a composition bias toward polar residues.

As to quaternary structure, component of a mRNP complex containing PIWIL2, TDRD1 and piRNAs. Component of the PET complex, at least composed of EXD1, PIWIL2, TDRD12 and piRNAs.

It catalyses the reaction ATP + H2O = ADP + phosphate + H(+). Its function is as follows. Probable ATP-binding RNA helicase required during spermatogenesis to repress transposable elements and preventing their mobilization, which is essential for the germline integrity. Acts via the piRNA metabolic process, which mediates the repression of transposable elements during meiosis by forming complexes composed of piRNAs and Piwi proteins and governs the methylation and subsequent repression of transposons. Involved in the secondary piRNAs metabolic process. Acts via the PET complex, a multiprotein complex required during the secondary piRNAs metabolic process for the PIWIL2 slicing-triggered loading of PIWIL4 piRNAs. This Homo sapiens (Human) protein is Putative ATP-dependent RNA helicase TDRD12 (TDRD12).